Here is a 133-residue protein sequence, read N- to C-terminus: Small ribosomal subunit protein uS8 (133 aa).

The protein belongs to the universal ribosomal protein uS8 family. Part of the 30S ribosomal subunit. Contacts proteins S5 and S12.

In terms of biological role, one of the primary rRNA binding proteins, it binds directly to 16S rRNA central domain where it helps coordinate assembly of the platform of the 30S subunit. In Chlamydia trachomatis serovar A (strain ATCC VR-571B / DSM 19440 / HAR-13), this protein is Small ribosomal subunit protein uS8.